Reading from the N-terminus, the 391-residue chain is GATA-binding factor 6-B (391 aa).

Over residues 57 to 69 (GTHSVNSHWSQAT) the composition is skewed to polar residues. Residues 57–107 (GTHSVNSHWSQATSESSSYSSSSPHPSSRYHYSPSPPMANGSTRDTGYSSS) form a disordered region. The segment covering 70–89 (SESSSYSSSSPHPSSRYHYS) has biased composition (low complexity). Over residues 96 to 107 (NGSTRDTGYSSS) the composition is skewed to polar residues. GATA-type zinc fingers lie at residues 182–206 (CVNC…CNAC) and 236–260 (CANC…CNAC). The disordered stretch occupies residues 277–334 (KEGIQTRKRKPKNLNKSKSSSSNGNSSHHITMTPTSTTSSTNSDDCIKNGSPSQNTAP). Basic residues predominate over residues 282-291 (TRKRKPKNLN). Low complexity predominate over residues 292–319 (KSKSSSSNGNSSHHITMTPTSTTSSTNS).

In embryos, expressed in the presumptive heart mesoderm. In adults, widely distributed but predominant in the heart.

It localises to the nucleus. Its function is as follows. Transcriptional activator that binds 5'-GATA-3'-containing motifs within gene promoters. Regulates cardiac-specific transcription during embryogenesis and thereby cardiogenesis. This Xenopus laevis (African clawed frog) protein is GATA-binding factor 6-B (gata6-b).